The sequence spans 283 residues: Protein/nucleic acid deglycase HchA (283 aa).

Residues His-86, Glu-91, and His-123 each contribute to the Zn(2+) site. The Nucleophile role is filled by Cys-185.

It belongs to the peptidase C56 family. HchA subfamily. Homodimer.

The protein resides in the cytoplasm. The enzyme catalyses N(omega)-(1-hydroxy-2-oxopropyl)-L-arginyl-[protein] + H2O = lactate + L-arginyl-[protein] + H(+). It catalyses the reaction N(6)-(1-hydroxy-2-oxopropyl)-L-lysyl-[protein] + H2O = lactate + L-lysyl-[protein] + H(+). The catalysed reaction is S-(1-hydroxy-2-oxopropyl)-L-cysteinyl-[protein] + H2O = lactate + L-cysteinyl-[protein] + H(+). It carries out the reaction N(omega)-(1-hydroxy-2-oxoethyl)-L-arginyl-[protein] + H2O = L-arginyl-[protein] + glycolate + H(+). The enzyme catalyses N(6)-(1-hydroxy-2-oxoethyl)-L-lysyl-[protein] + H2O = glycolate + L-lysyl-[protein] + H(+). It catalyses the reaction S-(1-hydroxy-2-oxoethyl)-L-cysteinyl-[protein] + H2O = glycolate + L-cysteinyl-[protein] + H(+). The catalysed reaction is N(2)-(1-hydroxy-2-oxopropyl)-dGTP + H2O = lactate + dGTP + H(+). It carries out the reaction N(2)-(1-hydroxy-2-oxopropyl)-GTP + H2O = lactate + GTP + H(+). The enzyme catalyses N(2)-(1-hydroxy-2-oxopropyl)-GDP + H2O = lactate + GDP + H(+). It catalyses the reaction N(2)-(1-hydroxy-2-oxopropyl)-GMP + H2O = lactate + GMP + H(+). The catalysed reaction is N(2)-(1-hydroxy-2-oxoethyl)-dGTP + H2O = dGTP + glycolate + H(+). It carries out the reaction N(2)-(1-hydroxy-2-oxoethyl)-GTP + H2O = glycolate + GTP + H(+). The enzyme catalyses N(2)-(1-hydroxy-2-oxoethyl)-GDP + H2O = glycolate + GDP + H(+). It catalyses the reaction N(2)-(1-hydroxy-2-oxoethyl)-GMP + H2O = glycolate + GMP + H(+). The catalysed reaction is an N(2)-(1-hydroxy-2-oxopropyl)-guanosine in RNA + H2O = a guanosine in RNA + lactate + H(+). It carries out the reaction an N(2)-(1-hydroxy-2-oxopropyl)-2'-deoxyguanosine in DNA + H2O = a 2'-deoxyguanosine in DNA + lactate + H(+). The enzyme catalyses an N(2)-(1-hydroxy-2-oxoethyl)-guanosine in RNA + H2O = a guanosine in RNA + glycolate + H(+). It catalyses the reaction an N(2)-(1-hydroxy-2-oxoethyl)-2'-deoxyguanosine in DNA + H2O = a 2'-deoxyguanosine in DNA + glycolate + H(+). Functionally, protein and nucleotide deglycase that catalyzes the deglycation of the Maillard adducts formed between amino groups of proteins or nucleotides and reactive carbonyl groups of glyoxals. Thus, functions as a protein deglycase that repairs methylglyoxal- and glyoxal-glycated proteins, and releases repaired proteins and lactate or glycolate, respectively. Deglycates cysteine, arginine and lysine residues in proteins, and thus reactivates these proteins by reversing glycation by glyoxals. Acts on early glycation intermediates (hemithioacetals and aminocarbinols), preventing the formation of Schiff bases and advanced glycation endproducts (AGE). Also functions as a nucleotide deglycase able to repair glycated guanine in the free nucleotide pool (GTP, GDP, GMP, dGTP) and in DNA and RNA. Is thus involved in a major nucleotide repair system named guanine glycation repair (GG repair), dedicated to reversing methylglyoxal and glyoxal damage via nucleotide sanitization and direct nucleic acid repair. Plays an important role in protecting cells from carbonyl stress. In Escherichia coli O157:H7, this protein is Protein/nucleic acid deglycase HchA.